A 227-amino-acid polypeptide reads, in one-letter code: UPF0173 metal-dependent hydrolase BCG9842_B0515 (227 aa).

Belongs to the UPF0173 family.

The sequence is that of UPF0173 metal-dependent hydrolase BCG9842_B0515 from Bacillus cereus (strain G9842).